A 683-amino-acid polypeptide reads, in one-letter code: U4/U6 small nuclear ribonucleoprotein Prp3 (683 aa).

In terms of domain architecture, PWI spans 1–87; it reads MALSKRELDE…HSKSSSDRSR (87 aa). The span at 73-107 shows a compositional bias: basic and acidic residues; sequence GRSSRHSKSSSDRSRKRELKEVFGDDSEISKESSG. The disordered stretch occupies residues 73-135; sequence GRSSRHSKSS…IPGPPSESPG (63 aa). A Glycyl lysine isopeptide (Lys-Gly) (interchain with G-Cter in SUMO2) cross-link involves residue K139. The segment at 153 to 183 is disordered; that stretch reads IEERKKQLSFISPPTPQPKTPSSSQPERLPI. Residue S164 is modified to Phosphoserine. Phosphothreonine is present on T167. Glycyl lysine isopeptide (Lys-Gly) (interchain with G-Cter in SUMO2) cross-links involve residues K244 and K252. Positions 416–550 are mediates interaction with SART3; it reads NLVEHPAQLN…VHISVYRVRN (135 aa). Phosphoserine is present on S619.

In terms of assembly, component of the precatalytic spliceosome (spliceosome B complex). Component of the U4/U6-U5 tri-snRNP complex, a building block of the precatalytic spliceosome (spliceosome B complex). The U4/U6-U5 tri-snRNP complex is composed of the U4, U6 and U5 snRNAs and at least PRPF3, PRPF4, PRPF6, PRPF8, PRPF31, SNRNP200, TXNL4A, SNRNP40, SNRPB, SNRPD1, SNRPD2, SNRPD3, SNRPE, SNRPF, SNRPG, DDX23, CD2BP2, PPIH, SNU13, EFTUD2, SART1 and USP39, plus LSM2, LSM3, LSM4, LSM5, LSM6, LSM7 and LSM8. Interacts directly with PRPF4. Part of a heteromeric complex containing PPIH, PRPF3 and PRPF4 that is stable in the absence of RNA. Interacts with SART3; the interaction is direct and recruits the deubiquitinase USP4 to PRPF3. Interacts with PRPF19. Interacts ('Lys-63'-linked polyubiquitinated) with PRPF8 (via the MPN (JAB/Mov34) domain); may stabilize the U4/U6-U5 tri-snRNP complex. Interacts with ERCC6. In terms of processing, ubiquitinated. Undergoes 'Lys-63'-linked polyubiquitination by PRPF19 and deubiquitination by USP4. 'Lys-63'-linked ubiquitination increases the affinity for PRPF8 and may regulate the assembly of the U4/U6-U5 tri-snRNP complex. As to expression, highly expressed in retina, liver, kidney and blood. Detected at lower levels in heart and brain.

It localises to the nucleus. It is found in the nucleus speckle. In terms of biological role, plays a role in pre-mRNA splicing as component of the U4/U6-U5 tri-snRNP complex that is involved in spliceosome assembly, and as component of the precatalytic spliceosome (spliceosome B complex). The sequence is that of U4/U6 small nuclear ribonucleoprotein Prp3 (PRPF3) from Homo sapiens (Human).